The sequence spans 767 residues: Slo-interacting protein 1 (767 aa).

In terms of domain architecture, PDZ spans 202-280 (QQSSTDTNKG…SVTLLVSRIL (79 aa)). Disordered stretches follow at residues 521 to 557 (GNAAAPGEEVDNSSSAYNTGDSNNSASPHQNTTNPDE) and 744 to 767 (KEERKRHIERAREKRHHQTQQQQQ). Over residues 532–555 (NSSSAYNTGDSNNSASPHQNTTNP) the composition is skewed to polar residues. The span at 744 to 755 (KEERKRHIERAR) shows a compositional bias: basic and acidic residues.

As to quaternary structure, interacts with Slo. As to expression, in embryos, it is expressed throughout the CNS and in several peripheral locations. Colocalizes with Slo.

Its function is as follows. May selectively reduce calcium-activated potassium channel (Slo) currents by reducing the number of Slo channels in the plasma membrane. The sequence is that of Slo-interacting protein 1 (Slip1) from Drosophila melanogaster (Fruit fly).